A 413-amino-acid chain; its full sequence is Palmitoyltransferase ZDHHC6 (413 aa).

At 1-24 (MGTFCSVVKFENLQELKRLCHWGP) the chain is on the cytoplasmic side. A helical membrane pass occupies residues 25 to 45 (IIALGVIAICSAMAMIDSVLW). The Lumenal segment spans residues 46–57 (YWPLHTTGGSVN). A helical membrane pass occupies residues 58-78 (FIMLINWTVMILYNYFNAMFV). Residues 79-143 (GPGFVPLGWK…NCCGYQNHAS (65 aa)) lie on the Cytoplasmic side of the membrane. Positions 99 to 149 (QYCKVCQAYKAPRSHHCRKCNRCVMKMDHHCPWINNCCGYQNHASFTLFLL) constitute a DHHC domain. Cys129 serves as the catalytic S-palmitoyl cysteine intermediate. The helical transmembrane segment at 144–164 (FTLFLLLAPLGCIHAAFIFVM) threads the bilayer. The Lumenal portion of the chain corresponds to 165-194 (TMYTQLYNRLSFGWNTVKIDMSAARRDPLP). A helical membrane pass occupies residues 195-215 (IIPFGLAAFAATLFALGLALG). At 216 to 413 (TTIAVGMLFF…QAPEGEKKNR (198 aa)) the chain is on the cytoplasmic side. The SH3 domain maps to 313–398 (VRSVRYKVIE…PRNCVEKCPC (86 aa)). Residues Cys328, Cys329, and Cys343 are each lipidated (S-palmitoyl cysteine). Residues 410–413 (KKNR) carry the Di-lysine motif motif.

It belongs to the DHHC palmitoyltransferase family. As to quaternary structure, homooligomerizes. Interacts with SELENOK. In terms of processing, palmitoylated at 3 different sites by ZDHHC16. The combination of the different palmitoylation events strongly affects the quaternary assembly of ZDHHC6, its localization, stability and function. Palmitoylation at Cys-328 accelerates the turnover of ZDHHC6. Depalmitoylated by LYPLA2.

It localises to the endoplasmic reticulum membrane. The enzyme catalyses L-cysteinyl-[protein] + hexadecanoyl-CoA = S-hexadecanoyl-L-cysteinyl-[protein] + CoA. It catalyses the reaction L-cysteinyl-[protein] + octadecanoyl-CoA = S-octadecanoyl-L-cysteinyl-[protein] + CoA. Functionally, endoplasmic reticulum palmitoyl acyltransferase that mediates palmitoylation of proteins such as AMFR, CALX, ITPR1 and TFRC. Palmitoylates calnexin (CALX), which is required for its association with the ribosome-translocon complex and efficient folding of glycosylated proteins. Mediates palmitoylation of AMFR, promoting AMFR distribution to the peripheral endoplasmic reticulum. Together with SELENOK, palmitoylates ITPR1 in immune cells, leading to regulate ITPR1 stability and function. Stearoyltransferase that mediates stearoylation of TFRC to inhibit TFRC-mediated activation of the JNK pathway and mitochondrial fragmentation. This is Palmitoyltransferase ZDHHC6 from Bos taurus (Bovine).